The primary structure comprises 620 residues: Threonine--tRNA ligase (620 aa).

The region spanning 1 to 42 (MFEIAKGISNSLAKKSVGAKVDGKNVDMSYILDHDAEVEFID) is the TGS domain. The interval 224–515 (DHRKLGKELE…LIEHYAGAFP (292 aa)) is catalytic. Cys-315, His-366, and His-492 together coordinate Zn(2+).

This sequence belongs to the class-II aminoacyl-tRNA synthetase family. As to quaternary structure, homodimer. It depends on Zn(2+) as a cofactor.

It is found in the cytoplasm. The catalysed reaction is tRNA(Thr) + L-threonine + ATP = L-threonyl-tRNA(Thr) + AMP + diphosphate + H(+). Functionally, catalyzes the attachment of threonine to tRNA(Thr) in a two-step reaction: L-threonine is first activated by ATP to form Thr-AMP and then transferred to the acceptor end of tRNA(Thr). Also edits incorrectly charged L-seryl-tRNA(Thr). The protein is Threonine--tRNA ligase of Fusobacterium nucleatum subsp. nucleatum (strain ATCC 25586 / DSM 15643 / BCRC 10681 / CIP 101130 / JCM 8532 / KCTC 2640 / LMG 13131 / VPI 4355).